We begin with the raw amino-acid sequence, 414 residues long: 2,3-bisphosphoglycerate-independent phosphoglycerate mutase (414 aa).

This sequence belongs to the BPG-independent phosphoglycerate mutase family. A-PGAM subfamily.

It catalyses the reaction (2R)-2-phosphoglycerate = (2R)-3-phosphoglycerate. Its pathway is carbohydrate degradation; glycolysis; pyruvate from D-glyceraldehyde 3-phosphate: step 3/5. Catalyzes the interconversion of 2-phosphoglycerate and 3-phosphoglycerate. The chain is 2,3-bisphosphoglycerate-independent phosphoglycerate mutase from Saccharolobus islandicus (strain M.14.25 / Kamchatka #1) (Sulfolobus islandicus).